Here is a 180-residue protein sequence, read N- to C-terminus: E1B protein, small T-antigen (180 aa).

The segment at G142–N180 is disordered. A compositionally biased stretch (basic and acidic residues) spans Q157–S172.

Belongs to the adenoviridae E1B 19 kDa protein family.

In Simian adenovirus serotype 7 (SAdV-7), this protein is E1B protein, small T-antigen.